The primary structure comprises 597 residues: Cytosolic Fe-S cluster assembly factor nar1 (597 aa).

Position 20 (Cys20) interacts with [4Fe-4S] cluster. Residues 25 to 46 are disordered; sequence ESLPQKESQSENPYEVTKEDKV. [4Fe-4S] cluster contacts are provided by Cys61, Cys64, Cys67, Cys208, and Cys263. The interval 424–449 is disordered; it reads RLPGAKPQAVSSSANRRQPMSRNAAP. Polar residues predominate over residues 432-444; that stretch reads AVSSSANRRQPMS. Positions 464 and 468 each coordinate [4Fe-4S] cluster.

This sequence belongs to the NARF family.

In terms of biological role, component of the cytosolic Fe/S protein assembly machinery. Required for maturation of extramitochondrial Fe/S proteins. May play a role in the transfer of pre-assembled Fe/S clusters to target apoproteins. This is Cytosolic Fe-S cluster assembly factor nar1 (nar1) from Aspergillus fumigatus (strain ATCC MYA-4609 / CBS 101355 / FGSC A1100 / Af293) (Neosartorya fumigata).